Reading from the N-terminus, the 474-residue chain is tRNA-2-methylthio-N(6)-dimethylallyladenosine synthase (474 aa).

The region spanning 3 to 120 is the MTTase N-terminal domain; it reads KKLHIKTWGC…LPEMINSVRG (118 aa). 6 residues coordinate [4Fe-4S] cluster: C12, C49, C83, C157, C161, and C164. In terms of domain architecture, Radical SAM core spans 143–375; the sequence is RAEGPTAFVS…QERINQQAMA (233 aa). The region spanning 378–441 is the TRAM domain; sequence RRMLGTVQRI…TNSLRGKVVR (64 aa).

The protein belongs to the methylthiotransferase family. MiaB subfamily. In terms of assembly, monomer. It depends on [4Fe-4S] cluster as a cofactor.

The protein resides in the cytoplasm. The enzyme catalyses N(6)-dimethylallyladenosine(37) in tRNA + (sulfur carrier)-SH + AH2 + 2 S-adenosyl-L-methionine = 2-methylsulfanyl-N(6)-dimethylallyladenosine(37) in tRNA + (sulfur carrier)-H + 5'-deoxyadenosine + L-methionine + A + S-adenosyl-L-homocysteine + 2 H(+). Functionally, catalyzes the methylthiolation of N6-(dimethylallyl)adenosine (i(6)A), leading to the formation of 2-methylthio-N6-(dimethylallyl)adenosine (ms(2)i(6)A) at position 37 in tRNAs that read codons beginning with uridine. The chain is tRNA-2-methylthio-N(6)-dimethylallyladenosine synthase from Citrobacter koseri (strain ATCC BAA-895 / CDC 4225-83 / SGSC4696).